A 372-amino-acid polypeptide reads, in one-letter code: Dof zinc finger protein DOF5.6 (372 aa).

The Dof-type zinc finger occupies 73–127 (QKCPRCESTHTKFCYYNNYSLSQPRYFCKTCRRYWTKGGTLRNIPVGGGCRKNKK). Zn(2+)-binding residues include Cys75, Cys78, Cys100, and Cys103. Residues 117–146 (PVGGGCRKNKKPSSSNSSSSTSSGKKPSNI) form a disordered region. A compositionally biased stretch (low complexity) spans 128–145 (PSSSNSSSSTSSGKKPSN).

The PEAR proteins (e.g. DOF2.4, DOF5.1, DOF3.2, DOF1.1, DOF5.6 and DOF5.3) form a short-range concentration gradient that peaks at protophloem sieve elements (PSE). Preferentially expressed in the vasculature of all organs, including seedlings, roots, stems, buds, leaves, flowers and siliques, and particularly in the cambium, phloem and interfascicular parenchyma cells of inflorescence stems.

Its subcellular location is the nucleus. Functionally, transcription factor that binds specifically to a 5'-AA[AG]G-3' consensus core sequence. Promotes expression. The PEAR proteins (e.g. DOF2.4, DOF5.1, DOF3.2, DOF1.1, DOF5.6 and DOF5.3) activate gene expression that promotes radial growth of protophloem sieve elements. Involved in the regulation of interfascicular cambium formation and vascular tissue development, particularly at a very early stage during inflorescence stem development; promotes both cambium activity and phloem specification, but prevents xylem specification. This is Dof zinc finger protein DOF5.6 from Arabidopsis thaliana (Mouse-ear cress).